The sequence spans 459 residues: Serine protease HTRA3 (459 aa).

The first 23 residues, 1–23 (MQARALLPATLAILATLAVLALA), serve as a signal peptide directing secretion. The region spanning 27 to 90 (PAAPCPARCD…ECVRGVCRCR (64 aa)) is the IGFBP N-terminal domain. Cystine bridges form between cysteine 31–cysteine 54, cysteine 35–cysteine 56, cysteine 40–cysteine 57, cysteine 45–cysteine 60, cysteine 68–cysteine 82, cysteine 76–cysteine 87, cysteine 89–cysteine 107, and cysteine 96–cysteine 132. The Kazal-like domain occupies 76–134 (CGDSLECVRGVCRCRWTHTVCGTDGHTYADVCALQAASRRALQVSGTPVRQLQKGACPS). The tract at residues 181 to 347 (GSGFIMSEAG…IPSDRITRFL (167 aa)) is serine protease. Catalysis depends on charge relay system residues histidine 197, aspartate 233, and serine 311. Positions 365 to 450 (IRMRTITPSL…EVRRGNDDLL (86 aa)) constitute a PDZ domain.

Belongs to the peptidase S1C family. In terms of assembly, homotrimer. Interacts with MYH9. Interacts with TGFB1; the interaction inhibits TGFB-mediated signaling. Interacts with BMP4; the interaction inhibits BMP4-mediated signaling. Interacts with TGFB2 and GDF5. Highest level of isoform 1 in maternal part of the placenta, moderate level in heart, testis and ovary, low level in muscle and lung. High expression found in granulosa cells of the ovary. Expressed in bone matrix, particularly in articular chondrocytes. Very low level of isoform 2 expressed in placenta. Expressed in the bone matrix, particularly in articular chondrocytes.

It is found in the secreted. Functionally, serine protease that cleaves beta-casein/CSN2 as well as several extracellular matrix (ECM) proteoglycans such as decorin/DCN, biglycan/BGN and fibronectin/FN1. Inhibits signaling mediated by TGF-beta family proteins possibly indirectly by degradation of these ECM proteoglycans. May act as a tumor suppressor. Negatively regulates, in vitro, trophoblast invasion during placental development and may be involved in the development of the placenta in vivo. May also have a role in ovarian development, granulosa cell differentiation and luteinization. This Mus musculus (Mouse) protein is Serine protease HTRA3 (Htra3).